The sequence spans 111 residues: Ribonuclease P protein component (111 aa).

Belongs to the RnpA family. Consists of a catalytic RNA component (M1 or rnpB) and a protein subunit.

The enzyme catalyses Endonucleolytic cleavage of RNA, removing 5'-extranucleotides from tRNA precursor.. Its function is as follows. RNaseP catalyzes the removal of the 5'-leader sequence from pre-tRNA to produce the mature 5'-terminus. It can also cleave other RNA substrates such as 4.5S RNA. The protein component plays an auxiliary but essential role in vivo by binding to the 5'-leader sequence and broadening the substrate specificity of the ribozyme. The protein is Ribonuclease P protein component of Clostridium botulinum (strain Loch Maree / Type A3).